The chain runs to 206 residues: Orotate phosphoribosyltransferase (206 aa).

Residues Arg-93, Lys-97, His-99, and 119 to 127 contribute to the 5-phospho-alpha-D-ribose 1-diphosphate site; that span reads EDLISTGGT. Ser-123 lines the orotate pocket.

Belongs to the purine/pyrimidine phosphoribosyltransferase family. PyrE subfamily. As to quaternary structure, homodimer. It depends on Mg(2+) as a cofactor.

The enzyme catalyses orotidine 5'-phosphate + diphosphate = orotate + 5-phospho-alpha-D-ribose 1-diphosphate. It participates in pyrimidine metabolism; UMP biosynthesis via de novo pathway; UMP from orotate: step 1/2. Catalyzes the transfer of a ribosyl phosphate group from 5-phosphoribose 1-diphosphate to orotate, leading to the formation of orotidine monophosphate (OMP). This chain is Orotate phosphoribosyltransferase, found in Bacillus caldolyticus.